An 88-amino-acid polypeptide reads, in one-letter code: Small ribosomal subunit protein bS20 (88 aa).

This sequence belongs to the bacterial ribosomal protein bS20 family.

Binds directly to 16S ribosomal RNA. This Bradyrhizobium diazoefficiens (strain JCM 10833 / BCRC 13528 / IAM 13628 / NBRC 14792 / USDA 110) protein is Small ribosomal subunit protein bS20.